A 297-amino-acid polypeptide reads, in one-letter code: Transcription factor PCF8 (297 aa).

The segment at 1–22 (MEEVVGGGKERKRPRGALVGVG) is disordered. The TCP domain occupies 46–104 (GKDRHSKVVTSRGLRDRRVRLSVPTAIAFYDIQDRLGVDQPSKAIEWLIRAAAAAIDAL). Disordered stretches follow at residues 116–136 (AASSPPPPAADDAEVSTSETS) and 273–297 (AAPAATTNGGERRLQLWDFKEERKT). A compositionally biased stretch (basic and acidic residues) spans 282–297 (GERRLQLWDFKEERKT).

Forms homodimers and heterodimers.

The protein resides in the nucleus. Its function is as follows. Transcription activator. Binds the promoter core sequence 5'-GGNCC-3'. This Oryza sativa subsp. indica (Rice) protein is Transcription factor PCF8 (PCF8).